We begin with the raw amino-acid sequence, 108 residues long: Insulin (108 aa).

The first 24 residues, 1–24 (MALWTRLLPLLALLALWAPAPAQA), serve as a signal peptide directing secretion. Cystine bridges form between Cys31-Cys94, Cys43-Cys107, and Cys93-Cys98. Residues 57-85 (EAENPQAGAVELGGGLGGLQALALEGPPQ) constitute a propeptide, c peptide.

This sequence belongs to the insulin family. As to quaternary structure, heterodimer of a B chain and an A chain linked by two disulfide bonds.

It localises to the secreted. Insulin decreases blood glucose concentration. It increases cell permeability to monosaccharides, amino acids and fatty acids. It accelerates glycolysis, the pentose phosphate cycle, and glycogen synthesis in liver. In Sus scrofa (Pig), this protein is Insulin (INS).